The following is a 21-amino-acid chain: Helicopsin (21 aa).

This sequence belongs to the CRISP family. In terms of processing, contains 8 disulfide bonds. As to expression, expressed by the salivary gland.

The protein localises to the secreted. Functionally, helicopsin exhibits robust neurotoxic activity as shown by immediate death (about 8 minutes) of mice due to respiratory paralysis. The chain is Helicopsin from Helicops angulatus (South American water snake).